The chain runs to 201 residues: Dephospho-CoA kinase (201 aa).

In terms of domain architecture, DPCK spans 4–201 (SVGLTGNIAS…KYLREAKIKQ (198 aa)). ATP is bound at residue 12–17 (ASGKST).

The protein belongs to the CoaE family.

The protein resides in the cytoplasm. The enzyme catalyses 3'-dephospho-CoA + ATP = ADP + CoA + H(+). It participates in cofactor biosynthesis; coenzyme A biosynthesis; CoA from (R)-pantothenate: step 5/5. Its function is as follows. Catalyzes the phosphorylation of the 3'-hydroxyl group of dephosphocoenzyme A to form coenzyme A. This Legionella pneumophila (strain Lens) protein is Dephospho-CoA kinase.